We begin with the raw amino-acid sequence, 792 residues long: Phenylalanine--tRNA ligase beta subunit (792 aa).

The tRNA-binding domain maps to 39-147; it reads AAAFSGVVVG…DNAPIGQDIR (109 aa). The B5 domain occupies 400 to 475; it reads PERPAVRLRP…RLHGYDAIPA (76 aa). Residues Asp-453, Asp-459, Glu-462, and Glu-463 each contribute to the Mg(2+) site. The 94-residue stretch at 698–791 folds into the FDX-ACB domain; it reads SRQPAVTRDV…TETSLGARLR (94 aa).

Belongs to the phenylalanyl-tRNA synthetase beta subunit family. Type 1 subfamily. As to quaternary structure, tetramer of two alpha and two beta subunits. It depends on Mg(2+) as a cofactor.

The protein localises to the cytoplasm. It carries out the reaction tRNA(Phe) + L-phenylalanine + ATP = L-phenylalanyl-tRNA(Phe) + AMP + diphosphate + H(+). The polypeptide is Phenylalanine--tRNA ligase beta subunit (Aromatoleum aromaticum (strain DSM 19018 / LMG 30748 / EbN1) (Azoarcus sp. (strain EbN1))).